The chain runs to 307 residues: Aspartate carbamoyltransferase catalytic subunit (307 aa).

Residues R59 and T60 each coordinate carbamoyl phosphate. K87 contributes to the L-aspartate binding site. Carbamoyl phosphate is bound by residues R109, H137, and Q140. Residues R173 and R223 each contribute to the L-aspartate site. Carbamoyl phosphate-binding residues include G266 and P267.

The protein belongs to the aspartate/ornithine carbamoyltransferase superfamily. ATCase family. As to quaternary structure, heterododecamer (2C3:3R2) of six catalytic PyrB chains organized as two trimers (C3), and six regulatory PyrI chains organized as three dimers (R2).

It catalyses the reaction carbamoyl phosphate + L-aspartate = N-carbamoyl-L-aspartate + phosphate + H(+). Its pathway is pyrimidine metabolism; UMP biosynthesis via de novo pathway; (S)-dihydroorotate from bicarbonate: step 2/3. Its function is as follows. Catalyzes the condensation of carbamoyl phosphate and aspartate to form carbamoyl aspartate and inorganic phosphate, the committed step in the de novo pyrimidine nucleotide biosynthesis pathway. This Helicobacter pylori (strain HPAG1) protein is Aspartate carbamoyltransferase catalytic subunit.